The sequence spans 242 residues: Venom nerve growth factor 2 (242 aa).

A signal peptide spans 1–18; the sequence is MSMLCYTLIIAFLIGIWA. Positions 19–125 are excised as a propeptide; it reads APKSEDNVPL…ALNRNIRSKR (107 aa). Residues 46 to 69 are disordered; sequence KALKTSRNTDQRHPAPKKAEDQEL. The segment covering 52–66 has biased composition (basic and acidic residues); that stretch reads RNTDQRHPAPKKAED. 3 disulfides stabilise this stretch: Cys-139–Cys-203, Cys-181–Cys-231, and Cys-191–Cys-233. An N-linked (GlcNAc...) asparagine glycan is attached at Asn-147.

Belongs to the NGF-beta family. As to quaternary structure, homodimer; non-covalently linked. Expressed by the venom gland.

The protein resides in the secreted. Functionally, nerve growth factor is important for the development and maintenance of the sympathetic and sensory nervous systems. It stimulates division and differentiation of sympathetic and embryonic sensory neurons as well as basal forebrain cholinergic neurons in the brain. Its relevance in the snake venom is not clear. However, it has been shown to inhibit metalloproteinase-dependent proteolysis of platelet glycoprotein Ib alpha, suggesting a metalloproteinase inhibition to prevent metalloprotease autodigestion and/or protection against prey proteases. Binds a lipid between the two protein chains in the homodimer. The lipid-bound form promotes histamine relase from mouse mast cells, contrary to the lipid-free form. This Demansia vestigiata (Lesser black whip snake) protein is Venom nerve growth factor 2.